The sequence spans 171 residues: Large ribosomal subunit protein uL10 (171 aa).

This sequence belongs to the universal ribosomal protein uL10 family. As to quaternary structure, part of the ribosomal stalk of the 50S ribosomal subunit. The N-terminus interacts with L11 and the large rRNA to form the base of the stalk. The C-terminus forms an elongated spine to which L12 dimers bind in a sequential fashion forming a multimeric L10(L12)X complex.

Functionally, forms part of the ribosomal stalk, playing a central role in the interaction of the ribosome with GTP-bound translation factors. This chain is Large ribosomal subunit protein uL10, found in Lactococcus lactis subsp. cremoris (strain SK11).